Here is a 1069-residue protein sequence, read N- to C-terminus: Leucine--tRNA ligase (1069 aa).

The tract at residues 19–53 (TAEHGTGAANATASPSGAVPPSGATATAGTGDEPG) is disordered. The short motif at 107–118 (PYPSGTGLHVGH) is the 'HIGH' region element. Over residues 823 to 836 (GRFTHHGAPVDRRS) the composition is skewed to basic and acidic residues. A disordered region spans residues 823–846 (GRFTHHGAPVDRRSGKMGKSLKNS). The 'KMSKS' region motif lies at 838–842 (KMGKS). Lys841 is an ATP binding site.

The protein belongs to the class-I aminoacyl-tRNA synthetase family.

Its subcellular location is the cytoplasm. The enzyme catalyses tRNA(Leu) + L-leucine + ATP = L-leucyl-tRNA(Leu) + AMP + diphosphate. The protein is Leucine--tRNA ligase of Frankia alni (strain DSM 45986 / CECT 9034 / ACN14a).